A 419-amino-acid polypeptide reads, in one-letter code: Histidine--tRNA ligase (419 aa).

The protein belongs to the class-II aminoacyl-tRNA synthetase family. In terms of assembly, homodimer.

The protein localises to the cytoplasm. It catalyses the reaction tRNA(His) + L-histidine + ATP = L-histidyl-tRNA(His) + AMP + diphosphate + H(+). The sequence is that of Histidine--tRNA ligase from Thiobacillus denitrificans (strain ATCC 25259 / T1).